Reading from the N-terminus, the 426-residue chain is Tachykinins (426 aa).

Residues 1–116 (MQCDFRVHQD…IEDNLSHEFE (116 aa)) constitute a propeptide that is removed on maturation. R127 bears the Arginine amide mark. Residues 131–145 (GYLTPDFEDSYFRDE) constitute a propeptide that is removed on maturation. Position 156 is an arginine amide (R156). The propeptide occupies 160–167 (VVSDDDYY). R178 carries the arginine amide modification. The propeptide occupies 182–235 (SLEEVLGEIEKKAAMDYYDTRDKKTYVFEYPEDYEKRLLASIRGKLKEFPMEWE). Residue R246 is modified to Arginine amide. The propeptide occupies 250–259 (SLLDEIEELE). Residue R270 is modified to Arginine amide. Positions 274–291 (NALENYIDYYLDPDMDFD) are excised as a propeptide. The tract at residues 299–329 (QGMRGKKDSDKRAPMGFQGMRGKRNTGQRFD) is disordered. An Arginine amide modification is found at R302. The propeptide occupies 306 to 308 (DSD). Arginine amide is present on R319. A propeptide spanning residues 323–358 (NTGQRFDTGINFNIRSSNEYQGTNNRRNALASCQLE) is cleaved from the precursor. Arginine amide occurs at positions 369 and 386. Positions 390–426 (WATAPYEDDSPFISVFDNTERIGVDGDSPAILGNSIS) are excised as a propeptide.

The protein belongs to the tachykinin family. In terms of tissue distribution, tachykinins (TK) are expressed throughout the nervous system. APMGFQGMR-amide is also expressed in the retrocerebral complex (at protein level).

The protein localises to the secreted. In terms of biological role, tachykinins are active peptides which excite neurons, evoke behavioral responses, are potent vasodilators and secretagogues, and contract (directly or indirectly) many smooth muscles. This is Tachykinins from Camponotus floridanus (Florida carpenter ant).